A 439-amino-acid chain; its full sequence is DNA damage-inducible protein 1 (439 aa).

A Ubiquitin-like domain is found at 1–82 (MQITIAIQDT…LALHVRETQR (82 aa)). The interval 82-101 (RATAVPESQQGRPAAPPQQD) is disordered. Asp-220 is a catalytic residue. The segment at 333-398 (QDEPTIEGPG…PAPRAPQARS (66 aa)) is disordered. Low complexity-rich tracts occupy residues 364–375 (GQAGPSTAAQPG) and 383–398 (PASA…QARS). The region spanning 398-438 (SFPREHIEQLVALGADEQKAIRALEATDGNVEYAASLIFEG) is the UBA domain.

The protein belongs to the DDI1 family. Binds ubiquitin and polyubiquitinated proteins.

The protein localises to the cytoplasm. In terms of biological role, probable aspartic protease. May be involved in the regulation of exocytosis. Acts as a linker between the 19S proteasome and polyubiquitinated proteins via UBA domain interactions with ubiquitin for their subsequent degradation. Required for S-phase checkpoint control. This is DNA damage-inducible protein 1 (ddi-1) from Neurospora crassa (strain ATCC 24698 / 74-OR23-1A / CBS 708.71 / DSM 1257 / FGSC 987).